Consider the following 509-residue polypeptide: Kelch repeat protein M-T9 (509 aa).

The BTB domain occupies 15–79 (SDVTVVAGDS…MYAGCDGLND (65 aa)). Kelch repeat units follow at residues 274–320 (VLYC…IVNG), 321–368 (YIYV…YRNE), 370–415 (WIVG…VYNN), 416–463 (RLYC…VYNK), and 465–509 (IYVL…NDEI).

Belongs to the poxviruses Kelch family.

The protein is Kelch repeat protein M-T9 of Myxoma virus (strain Lausanne) (MYXV).